A 283-amino-acid polypeptide reads, in one-letter code: Phosphatidylserine decarboxylase proenzyme (283 aa).

Catalysis depends on charge relay system; for autoendoproteolytic cleavage activity residues Asp90, His143, and Ser248. Catalysis depends on Ser248, which acts as the Schiff-base intermediate with substrate; via pyruvic acid; for decarboxylase activity. Ser248 bears the Pyruvic acid (Ser); by autocatalysis mark.

Belongs to the phosphatidylserine decarboxylase family. PSD-B subfamily. Prokaryotic type I sub-subfamily. Heterodimer of a large membrane-associated beta subunit and a small pyruvoyl-containing alpha subunit. Requires pyruvate as cofactor. Post-translationally, is synthesized initially as an inactive proenzyme. Formation of the active enzyme involves a self-maturation process in which the active site pyruvoyl group is generated from an internal serine residue via an autocatalytic post-translational modification. Two non-identical subunits are generated from the proenzyme in this reaction, and the pyruvate is formed at the N-terminus of the alpha chain, which is derived from the carboxyl end of the proenzyme. The autoendoproteolytic cleavage occurs by a canonical serine protease mechanism, in which the side chain hydroxyl group of the serine supplies its oxygen atom to form the C-terminus of the beta chain, while the remainder of the serine residue undergoes an oxidative deamination to produce ammonia and the pyruvoyl prosthetic group on the alpha chain. During this reaction, the Ser that is part of the protease active site of the proenzyme becomes the pyruvoyl prosthetic group, which constitutes an essential element of the active site of the mature decarboxylase.

Its subcellular location is the cell membrane. It carries out the reaction a 1,2-diacyl-sn-glycero-3-phospho-L-serine + H(+) = a 1,2-diacyl-sn-glycero-3-phosphoethanolamine + CO2. It functions in the pathway phospholipid metabolism; phosphatidylethanolamine biosynthesis; phosphatidylethanolamine from CDP-diacylglycerol: step 2/2. Its function is as follows. Catalyzes the formation of phosphatidylethanolamine (PtdEtn) from phosphatidylserine (PtdSer). The polypeptide is Phosphatidylserine decarboxylase proenzyme (Francisella tularensis subsp. holarctica (strain OSU18)).